Consider the following 699-residue polypeptide: Ferric reduction oxidase 4 (699 aa).

Residues Met1–Lys9 are Cytoplasmic-facing. A helical transmembrane segment spans residues Thr10 to Asn29. Residues Leu30–Asn54 are Lumenal-facing. Residues Leu55–Leu73 form a helical membrane-spanning segment. At His74 to Pro101 the chain is on the cytoplasmic side. The helical transmembrane segment at Leu102 to Tyr125 threads the bilayer. The Lumenal portion of the chain corresponds to Asn126–Lys190. The region spanning Gly157–Phe275 is the Ferric oxidoreductase domain. A helical transmembrane segment spans residues Tyr191–Trp214. His192 and His206 together coordinate heme. The Cytoplasmic portion of the chain corresponds to Ala215 to Tyr264. Residues Thr265–Leu289 form a helical membrane-spanning segment. Heme contacts are provided by His266 and His279. The Lumenal portion of the chain corresponds to Pro290–Arg311. The region spanning Gln305 to Asp408 is the FAD-binding FR-type domain. A helical membrane pass occupies residues Leu312–Gly332. At Leu333–Asn525 the chain is on the cytoplasmic side. FAD is bound at residue His354–Thr357. Gly400–Gly403 contributes to the NAD(+) binding site. The chain crosses the membrane as a helical span at residues Phe526–Thr548. Over Arg549 to Arg568 the chain is Lumenal. A helical membrane pass occupies residues Gly569–Trp590. The Cytoplasmic segment spans residues Arg591 to Trp699.

This sequence belongs to the ferric reductase (FRE) family. It depends on FAD as a cofactor. In terms of tissue distribution, expressed in siliques. Detected at low levels in roots, cotyledon veins and shoots.

The protein localises to the membrane. It catalyses the reaction 2 a Fe(II)-siderophore + NAD(+) + H(+) = 2 a Fe(III)-siderophore + NADH. In terms of biological role, ferric chelate reductase. May participate in the transport of electrons to a Fe(3+) ion via FAD and heme intermediates. May function as root surface cupric chelate reductase and participate in the reduction of Cu(2+), for Cu(+) acquisition via Cu(+) transporters in response to copper deficiency. This chain is Ferric reduction oxidase 4 (FRO4), found in Arabidopsis thaliana (Mouse-ear cress).